Reading from the N-terminus, the 236-residue chain is 1-(5-phosphoribosyl)-5-[(5-phosphoribosylamino)methylideneamino] imidazole-4-carboxamide isomerase (236 aa).

The Proton acceptor role is filled by aspartate 8. Aspartate 129 serves as the catalytic Proton donor.

It belongs to the HisA/HisF family.

Its subcellular location is the cytoplasm. The catalysed reaction is 1-(5-phospho-beta-D-ribosyl)-5-[(5-phospho-beta-D-ribosylamino)methylideneamino]imidazole-4-carboxamide = 5-[(5-phospho-1-deoxy-D-ribulos-1-ylimino)methylamino]-1-(5-phospho-beta-D-ribosyl)imidazole-4-carboxamide. It participates in amino-acid biosynthesis; L-histidine biosynthesis; L-histidine from 5-phospho-alpha-D-ribose 1-diphosphate: step 4/9. In Methanosphaerula palustris (strain ATCC BAA-1556 / DSM 19958 / E1-9c), this protein is 1-(5-phosphoribosyl)-5-[(5-phosphoribosylamino)methylideneamino] imidazole-4-carboxamide isomerase.